A 90-amino-acid polypeptide reads, in one-letter code: Small ribosomal subunit protein uS19 (90 aa).

This sequence belongs to the universal ribosomal protein uS19 family.

Its function is as follows. Protein S19 forms a complex with S13 that binds strongly to the 16S ribosomal RNA. The protein is Small ribosomal subunit protein uS19 of Nitrosococcus oceani (strain ATCC 19707 / BCRC 17464 / JCM 30415 / NCIMB 11848 / C-107).